Consider the following 101-residue polypeptide: Long chronological lifespan protein 1 (101 aa).

An N-terminal signal peptide occupies residues methionine 1–serine 17. A lipid anchor (GPI-anchor amidated serine) is attached at serine 81. The propeptide at phenylalanine 82–phenylalanine 101 is removed in mature form.

Its subcellular location is the cell membrane. This Saccharomyces cerevisiae (strain ATCC 204508 / S288c) (Baker's yeast) protein is Long chronological lifespan protein 1 (LCL1).